Reading from the N-terminus, the 534-residue chain is Peptide chain release factor 3 (534 aa).

One can recognise a tr-type G domain in the interval 9–278 (ARRRTFAIIS…FFVEHAPPPQ (270 aa)). Residues 18–25 (SHPDAGKT), 86–90 (DTPGH), and 140–143 (NKLD) contribute to the GTP site.

It belongs to the TRAFAC class translation factor GTPase superfamily. Classic translation factor GTPase family. PrfC subfamily.

The protein resides in the cytoplasm. In terms of biological role, increases the formation of ribosomal termination complexes and stimulates activities of RF-1 and RF-2. It binds guanine nucleotides and has strong preference for UGA stop codons. It may interact directly with the ribosome. The stimulation of RF-1 and RF-2 is significantly reduced by GTP and GDP, but not by GMP. The sequence is that of Peptide chain release factor 3 from Xanthomonas campestris pv. campestris (strain 8004).